The sequence spans 399 residues: Centrosomal protein 43 (399 aa).

The LisH domain occupies aspartate 70–glutamine 102. The interval glutamate 139 to leucine 217 is disordered. Threonine 143 is subject to Phosphothreonine. Serine 152 and serine 160 each carry phosphoserine. A compositionally biased stretch (polar residues) spans glycine 163–serine 172. Residue threonine 170 is modified to Phosphothreonine. Basic residues predominate over residues proline 175–serine 186. Residues serine 197–leucine 217 are compositionally biased toward low complexity. A Phosphoserine modification is found at serine 202. Threonine 234 bears the Phosphothreonine mark. The disordered stretch occupies residues aspartate 239–arginine 309. The segment covering proline 245–phenylalanine 256 has biased composition (acidic residues). Basic and acidic residues predominate over residues proline 259–lysine 275. A compositionally biased stretch (low complexity) spans arginine 290–leucine 302. Phosphoserine is present on residues serine 301, serine 326, and serine 331. The interval glycine 328–glutamate 357 is disordered. Phosphotyrosine is present on tyrosine 337.

Belongs to the CEP43 family. In terms of assembly, homodimer. Part of a ternary complex that contains CEP350, CEP43 and MAPRE1. Interacts directly with CEP350 and MAPRE1. Interacts with CEP19. Interacts (via N-terminus) with CEP350 (via C-terminus).

The protein resides in the cytoplasm. It is found in the cytoskeleton. Its subcellular location is the microtubule organizing center. The protein localises to the centrosome. It localises to the centriole. The protein resides in the cilium basal body. Its function is as follows. Required for anchoring microtubules to the centrosomes. Required for ciliation. The polypeptide is Centrosomal protein 43 (Cep43) (Rattus norvegicus (Rat)).